Consider the following 367-residue polypeptide: Ribosomal RNA large subunit methyltransferase M (367 aa).

S-adenosyl-L-methionine contacts are provided by residues Ser-188, Cys-221 to Gly-224, Asp-240, Asp-260, and Asp-277. Lys-306 serves as the catalytic Proton acceptor.

The protein belongs to the class I-like SAM-binding methyltransferase superfamily. RNA methyltransferase RlmE family. RlmM subfamily. In terms of assembly, monomer.

It is found in the cytoplasm. It carries out the reaction cytidine(2498) in 23S rRNA + S-adenosyl-L-methionine = 2'-O-methylcytidine(2498) in 23S rRNA + S-adenosyl-L-homocysteine + H(+). Catalyzes the 2'-O-methylation at nucleotide C2498 in 23S rRNA. The chain is Ribosomal RNA large subunit methyltransferase M from Serratia proteamaculans (strain 568).